Here is a 319-residue protein sequence, read N- to C-terminus: Taste receptor type 2 member 14 (319 aa).

Topologically, residues 1–7 (MDGVIKS) are extracellular. The chain crosses the membrane as a helical span at residues 8–28 (IFTFILIVEFIIGNLGNSFIV). The Cytoplasmic segment spans residues 29–55 (LVNCIDWVKRRKISLVDQILIALAISR). The helical transmembrane segment at 56-76 (ISLVWSIFGSWCVSVFFPALF) threads the bilayer. Over 77-87 (ATEKLLRMLTN) the chain is Extracellular. Residues T86 and W89 each coordinate cholesterol. The helical transmembrane segment at 88–108 (IWTVTNHFSVWLATILGTFYF) threads the bilayer. Over 109-129 (LKIANFSNSIFLYLKWRVKKV) the chain is Cytoplasmic. The chain crosses the membrane as a helical span at residues 130 to 150 (VLVLLLVTLGLLFLNILLINI). Over 151–184 (HINASINGYRGNMTCSSASCNFIRFSRAIALTST) the chain is Extracellular. N153 and N162 each carry an N-linked (GlcNAc...) asparagine glycan. A180 contributes to the cholesterol binding site. Residues 185–205 (VFVLIPFTLSLATSLLLSFSL) form a helical membrane-spanning segment. Topologically, residues 206 to 233 (WKHHKKMQHTVKGYRDVSTKAHRGVMQT) are cytoplasmic. The helical transmembrane segment at 234–254 (VITFLLLYAVFLLTFFISIWA) threads the bilayer. Residues 255-263 (SVRLKENQI) lie on the Extracellular side of the membrane. The helical transmembrane segment at 264 to 284 (IILSEMMGLAYPSGHSCVLIL) threads the bilayer. Cholesterol is bound by residues S267 and M270. Residues 285–319 (GNKKLRQASLSVLWWLRYRFKHGEPSGHKEFRESS) are Cytoplasmic-facing.

Belongs to the G-protein coupled receptor T2R family. Core component of the TAS2R14-GNAI1 complex, consisting of TAS2R14, GNAI1, GNB1 and GNG2; within the complex interacts with GNAI1. Core component of the TAS2R14-GNAT3 complex, consisting of TAS2R14, GNAT3, GNB1 and GNG2; within the complex interacts with GNAT3. Core component of the TAS2R14-GNAS2 complex, consisting of TAS2R14, GNAS2, GNB1 and GNG2; within the complex interacts with GNAS2.

It localises to the membrane. It carries out the reaction Ca(2+)(in) = Ca(2+)(out). It catalyses the reaction 3',5'-cyclic AMP(in) = 3',5'-cyclic AMP(out). Basal activity is enhanced by binding to bitter tastants, such as flufenamic acid and aristolochic acid. Regulated by cholesterol in a concentration-dependent manner. Its function is as follows. Gustducin-linked G-protein coupled receptor that plays a role in the perception of bitterness. The activity of this receptor stimulates GNAT3, activating the gustducin G-protein pathway. Likely plays a role in sensing the chemical composition of the gastrointestinal content and other extra-oral tissues via the inhibitory G-protein pathways. The sequence is that of Taste receptor type 2 member 14 (TAS2R14) from Macaca mulatta (Rhesus macaque).